The primary structure comprises 42 residues: Large ribosomal subunit protein bL36 (42 aa).

Belongs to the bacterial ribosomal protein bL36 family.

In Wolbachia pipientis wMel, this protein is Large ribosomal subunit protein bL36.